Reading from the N-terminus, the 118-residue chain is Phospholipase A2 'basic' (118 aa).

7 disulfide bridges follow: Cys-11/Cys-70, Cys-26/Cys-117, Cys-28/Cys-44, Cys-43/Cys-98, Cys-50/Cys-91, Cys-59/Cys-84, and Cys-77/Cys-89. Ca(2+) is bound by residues Tyr-27, Gly-29, and Gly-31. His-47 is an active-site residue. Residue Asp-48 participates in Ca(2+) binding. Residues 52 to 69 (EKAGKMGCWPYLTLYKYK) carry the Coagulation factor Xa binding motif motif. Asp-92 is an active-site residue.

The protein belongs to the phospholipase A2 family. Group I subfamily. D49 sub-subfamily. It depends on Ca(2+) as a cofactor. As to expression, expressed by the venom gland.

Its subcellular location is the secreted. It carries out the reaction a 1,2-diacyl-sn-glycero-3-phosphocholine + H2O = a 1-acyl-sn-glycero-3-phosphocholine + a fatty acid + H(+). Snake venom phospholipase A2 (PLA2) that shows strong anticoagulant activity. Binds directly with the coagulation factor FXa (F10) and blocks the formation of the prothombinase complex. Acts by a nonenzymatic mechanism. Also inhibits the complex composed of tissue factor (F3) and coagulation factor VIIa (F7) (TF-VIIa complex) by both enzymatic and nonenzymatic mechanisms. PLA2 catalyzes the calcium-dependent hydrolysis of the 2-acyl groups in 3-sn-phosphoglycerides. The chain is Phospholipase A2 'basic' from Naja nigricollis (Black-necked spitting cobra).